The chain runs to 296 residues: Acetylglutamate kinase (296 aa).

Substrate contacts are provided by residues 68-69 (GG), Arg-90, and Asn-195.

This sequence belongs to the acetylglutamate kinase family. ArgB subfamily.

The protein resides in the cytoplasm. The catalysed reaction is N-acetyl-L-glutamate + ATP = N-acetyl-L-glutamyl 5-phosphate + ADP. It participates in amino-acid biosynthesis; L-arginine biosynthesis; N(2)-acetyl-L-ornithine from L-glutamate: step 2/4. Functionally, catalyzes the ATP-dependent phosphorylation of N-acetyl-L-glutamate. This chain is Acetylglutamate kinase, found in Desulfotalea psychrophila (strain LSv54 / DSM 12343).